Reading from the N-terminus, the 209-residue chain is Imidazoleglycerol-phosphate dehydratase (209 aa).

The tract at residues 1–23 is disordered; it reads MQLSDRPLTAPGTAPRQATVSRR.

It belongs to the imidazoleglycerol-phosphate dehydratase family.

The protein resides in the cytoplasm. The catalysed reaction is D-erythro-1-(imidazol-4-yl)glycerol 3-phosphate = 3-(imidazol-4-yl)-2-oxopropyl phosphate + H2O. It participates in amino-acid biosynthesis; L-histidine biosynthesis; L-histidine from 5-phospho-alpha-D-ribose 1-diphosphate: step 6/9. This is Imidazoleglycerol-phosphate dehydratase from Synechococcus elongatus (strain ATCC 33912 / PCC 7942 / FACHB-805) (Anacystis nidulans R2).